Consider the following 216-residue polypeptide: Acyl-homoserine-lactone synthase (216 aa).

This sequence belongs to the autoinducer synthase family.

The enzyme catalyses a fatty acyl-[ACP] + S-adenosyl-L-methionine = an N-acyl-L-homoserine lactone + S-methyl-5'-thioadenosine + holo-[ACP] + H(+). Functionally, required for the synthesis of OHHL (N-(3-oxohexanoyl)-L-homoserine lactone), an autoinducer molecule which binds to a yet uncharacterized transcriptional regulator. The protein is Acyl-homoserine-lactone synthase (eagI) of Enterobacter agglomerans (Erwinia herbicola).